Reading from the N-terminus, the 1003-residue chain is PHD finger protein 12 (1003 aa).

The disordered stretch occupies residues 29–59; the sequence is APPKTDEAEKRSRKPEKESRRSGRATNHDSC. Basic and acidic residues predominate over residues 32–59; the sequence is KTDEAEKRSRKPEKESRRSGRATNHDSC. The PHD-type 1 zinc finger occupies 56–105; that stretch reads HDSCDSCKEGGDLLCCDHCPAAFHLQCCNPPLSEEMLPPGEWMCHRCTVR. The Zn(2+) site is built by Cys-59, Ser-61, Cys-62, His-79, and Cys-82. 2 disordered regions span residues 110–183 and 234–255; these read EQKK…HNDV and TTALPGSSKRRRKEETTGKNVK. Phosphoserine is present on residues Ser-131 and Ser-134. Residues 138-161 are compositionally biased toward basic and acidic residues; that stretch reads LLDRPASKTELKAIAHARILERRA. Over residues 165–178 the composition is skewed to polar residues; sequence GTPTSNASTETPTS. Positions 202 to 241 are SIN3 interacting domain 1; sequence VQPQLRRPFELLIAAAMERNPTQFQLPNELTCTTALPGSS. Residues 271 to 321 form a PHD-type 2; atypical zinc finger; it reads VKVCFTCNRSCRVAPLIQCDYCPLLFHMDCLEPPLTAMPLGRWMCPNHIEH. The Zn(2+) site is built by Cys-274, Cys-277, Cys-289, Cys-292, His-297, Cys-300, Cys-315, and His-318. The segment at 328 to 364 is SIN3 interacting domain 2; that stretch reads NLTLSNRCQVFDRFQDTISQHVVKVDFLNRIHKKHPP. A Glycyl lysine isopeptide (Lys-Gly) (interchain with G-Cter in SUMO2) cross-link involves residue Lys-467. Disordered regions lie at residues 531–583 and 641–671; these read KAPC…GWPR and HRKTVQSQIGPSSTESRPLGSPPNATRVLTP. Ser-555 bears the Phosphoserine mark. Residues Thr-557 and Thr-570 each carry the phosphothreonine modification. Residues 641–656 are compositionally biased toward polar residues; it reads HRKTVQSQIGPSSTES. Position 670 is a phosphothreonine (Thr-670). Positions 814 to 868 constitute an FHA domain; sequence LYIGTGADMDVCLTNYGHCNYVSGKHACIFYDENTKHYELLNYSEHGTTVDNVLY. The segment at 894 to 922 is disordered; it reads RRRHQKQDEEPSEEAAMMSSQAQGPQRRP. A Glycyl lysine isopeptide (Lys-Gly) (interchain with G-Cter in SUMO2) cross-link involves residue Lys-899. Positions 907-916 are enriched in low complexity; sequence EAAMMSSQAQ. Glycyl lysine isopeptide (Lys-Gly) (interchain with G-Cter in SUMO2) cross-links involve residues Lys-972, Lys-986, and Lys-990.

As to quaternary structure, component of SIN3 complexes. Interacts with SIN3A in a complex composed of HDAC1, SAP30 and SIN3A. Component of the SIN3B complex, which includes SIN3B, HDAC2 or HDAC1, PHF12 and MORF4L1; interacts directly with all subunits. Interacts with TLE5. In terms of tissue distribution, expressed mainly in heart, brain, lung, liver and testis.

It is found in the nucleus. Functionally, transcriptional repressor acting as key scaffolding subunit of SIN3 complexes which contributes to complex assembly by contacting each core subunit domain, stabilizes the complex and constitutes the substrate receptor by recruiting the H3 histone tail. SIN3 complexes are composed of a SIN3 scaffold subunit, one catalytic core (HDAC1 or HDAC2) and 2 chromatin targeting modules. SIN3B complex represses transcription and counteracts the histone acetyltransferase activity of EP300 through the recognition H3K27ac marks by PHF12 and the activity of the histone deacetylase HDAC2. SIN3B complex is recruited downstream of the constitutively active genes transcriptional start sites through interaction with histones and mitigates histone acetylation and RNA polymerase II progression within transcribed regions contributing to the regulation of transcription. May also repress transcription in a SIN3A-independent manner through recruitment of functional TLE5 complexes to DNA. May also play a role in ribosomal biogenesis. This Mus musculus (Mouse) protein is PHD finger protein 12.